The chain runs to 219 residues: Octanoyltransferase (219 aa).

The 176-residue stretch at 32 to 207 folds into the BPL/LPL catalytic domain; that stretch reads ASSPDQLWIV…TFSHNLGYQN (176 aa). Residues 71–78, 138–140, and 151–153 contribute to the substrate site; these read RGGQVTYH, SLG, and GLA. The active-site Acyl-thioester intermediate is C169.

It belongs to the LipB family.

It localises to the cytoplasm. It carries out the reaction octanoyl-[ACP] + L-lysyl-[protein] = N(6)-octanoyl-L-lysyl-[protein] + holo-[ACP] + H(+). It functions in the pathway protein modification; protein lipoylation via endogenous pathway; protein N(6)-(lipoyl)lysine from octanoyl-[acyl-carrier-protein]: step 1/2. Its function is as follows. Catalyzes the transfer of endogenously produced octanoic acid from octanoyl-acyl-carrier-protein onto the lipoyl domains of lipoate-dependent enzymes. Lipoyl-ACP can also act as a substrate although octanoyl-ACP is likely to be the physiological substrate. In Shewanella sediminis (strain HAW-EB3), this protein is Octanoyltransferase.